The following is a 187-amino-acid chain: 3'-5' DNA exonuclease Cap18 (187 aa).

The Exonuclease domain maps to 9 to 173 (VSVDVETSGP…HDARYQAELF (165 aa)). Residues aspartate 12, methionine 25, histidine 160, and aspartate 165 each contribute to the Mg(2+) site. Histidine 160 functions as the Proton donor/acceptor in the catalytic mechanism.

Belongs to the Cap18 exonuclease family. In terms of assembly, homodimer.

Functionally, effector component of a CBASS antivirus system. CBASS (cyclic oligonucleotide-based antiphage signaling system) provides immunity against bacteriophage. The CD-NTase protein synthesizes cyclic nucleotides in response to infection; these serve as specific second messenger signals. The signals activate a diverse range of effectors, leading to bacterial cell death and thus abortive phage infection. A type III CBASS system. A sequence non-specific 3'-5' DNA exonuclease that preferentially degrades ssDNA with 3' overhangs or a mismatch at the 3' end. Expression of this CBASS system (Cap17-CapW-CdnC-Cap7-Cap6-Cap18-Cap19) in a susceptible E.coli (strain JP313) confers resistance to bacteriophage lambda cI--. The sequence is that of 3'-5' DNA exonuclease Cap18 from Escherichia coli.